A 338-amino-acid polypeptide reads, in one-letter code: Taste receptor type 2 member 39 (338 aa).

Topologically, residues 1–30 (MLGRCFPPNTKEKQQLRMIKLCDPAESELS) are extracellular. A helical transmembrane segment spans residues 31–51 (PFLITLTLAVLLAEYLTGIIA). Topologically, residues 52–74 (NGFITAIHAAEWVQNKSVSTSGR) are cytoplasmic. The helical transmembrane segment at 75 to 95 (ILVFLSVSRIALQSLMMLEIT) threads the bilayer. The Extracellular segment spans residues 96 to 116 (ISSTSLSFYSEDAVYYAFKIS). The chain crosses the membrane as a helical span at residues 117-137 (FIFLNFCSLWFAAWLSFFYFV). The Cytoplasmic segment spans residues 138-156 (KIANFSYPLFLKLRWRISG). Residues 157–177 (LIPWLLWLSVFISFSHSMFCI) traverse the membrane as a helical segment. Topologically, residues 178–205 (NICTGYCDNSFPIHSSNSTEKTYFSEIS) are extracellular. The N-linked (GlcNAc...) asparagine glycan is linked to Asn-194. The chain crosses the membrane as a helical span at residues 206–226 (VVSLAFFFNLGIVIPLIMFIL). The Cytoplasmic portion of the chain corresponds to 227-262 (AAILLILSLKRHTLHMGSNATGSKDPSMEAHIGAIK). Residues 263 to 283 (ATSYFLILYIFNAVALFIYLS) traverse the membrane as a helical segment. The Extracellular segment spans residues 284–291 (NMFDINSL). A helical transmembrane segment spans residues 292-312 (WNTLCQIIMAAYPASHSILLI). The Cytoplasmic segment spans residues 313-338 (KDNPGLRRAWKQLQHRLHLYPKQWTL).

The protein belongs to the G-protein coupled receptor T2R family.

Its subcellular location is the membrane. Its function is as follows. Receptor that may play a role in the perception of bitterness and is gustducin-linked. May play a role in sensing the chemical composition of the gastrointestinal content. The activity of this receptor may stimulate alpha gustducin, mediate PLC-beta-2 activation and lead to the gating of TRPM5. The polypeptide is Taste receptor type 2 member 39 (TAS2R39) (Macaca mulatta (Rhesus macaque)).